A 284-amino-acid chain; its full sequence is Pseudouridine-5'-phosphate glycosidase (284 aa).

The active-site Proton donor is the glutamate 8. Residues lysine 69 and valine 89 each contribute to the substrate site. Aspartate 119 contacts Mn(2+). 121–123 (SQD) contributes to the substrate binding site. Residue lysine 140 is the Nucleophile of the active site.

Belongs to the pseudouridine-5'-phosphate glycosidase family. Homotrimer. Mn(2+) is required as a cofactor.

The catalysed reaction is D-ribose 5-phosphate + uracil = psi-UMP + H2O. Functionally, catalyzes the reversible cleavage of pseudouridine 5'-phosphate (PsiMP) to ribose 5-phosphate and uracil. Functions biologically in the cleavage direction, as part of a pseudouridine degradation pathway. The chain is Pseudouridine-5'-phosphate glycosidase from Pseudothermotoga lettingae (strain ATCC BAA-301 / DSM 14385 / NBRC 107922 / TMO) (Thermotoga lettingae).